Reading from the N-terminus, the 327-residue chain is Glycerol-3-phosphate acyltransferase (327 aa).

The next 5 helical transmembrane spans lie at 3-23 (SLLW…LLFA), 52-72 (VGVL…AVAL), 78-98 (TVFH…SCFL), 112-132 (VFLP…LAVI), and 152-172 (MLLL…MVLV). 2 disordered regions span residues 184 to 212 (SRGE…EAAA) and 233 to 327 (PSTE…SSGQ). Low complexity predominate over residues 199–212 (AQGTDAGAAPEAAA). Over residues 237–246 (AAPSQETSDA) the composition is skewed to polar residues. The segment covering 259–271 (EGDKRENEEHDNA) has biased composition (basic and acidic residues).

The protein belongs to the PlsY family. Probably interacts with PlsX.

Its subcellular location is the cell inner membrane. The catalysed reaction is an acyl phosphate + sn-glycerol 3-phosphate = a 1-acyl-sn-glycero-3-phosphate + phosphate. It functions in the pathway lipid metabolism; phospholipid metabolism. Catalyzes the transfer of an acyl group from acyl-phosphate (acyl-PO(4)) to glycerol-3-phosphate (G3P) to form lysophosphatidic acid (LPA). This enzyme utilizes acyl-phosphate as fatty acyl donor, but not acyl-CoA or acyl-ACP. The sequence is that of Glycerol-3-phosphate acyltransferase from Nitratidesulfovibrio vulgaris (strain ATCC 29579 / DSM 644 / CCUG 34227 / NCIMB 8303 / VKM B-1760 / Hildenborough) (Desulfovibrio vulgaris).